The following is a 119-amino-acid chain: Small ribosomal subunit protein bS16 (119 aa).

Positions 89-103 (TTKSTKEKAATDKKA) are enriched in basic and acidic residues. Residues 89-119 (TTKSTKEKAATDKKAKVTKKPKTKTTTDVKK) form a disordered region.

This sequence belongs to the bacterial ribosomal protein bS16 family.

The polypeptide is Small ribosomal subunit protein bS16 (Spiroplasma kunkelii).